Consider the following 256-residue polypeptide: Adenosine 5'-phosphosulfate reductase (256 aa).

[4Fe-4S] cluster is bound by residues Cys120, Cys121, Cys203, and Cys206. The active-site Nucleophile; cysteine thiosulfonate intermediate is the Cys231.

This sequence belongs to the PAPS reductase family. CysH subfamily. The cofactor is [4Fe-4S] cluster.

The protein resides in the cytoplasm. The catalysed reaction is [thioredoxin]-disulfide + sulfite + AMP + 2 H(+) = adenosine 5'-phosphosulfate + [thioredoxin]-dithiol. It functions in the pathway sulfur metabolism; hydrogen sulfide biosynthesis; sulfite from sulfate. Its function is as follows. Catalyzes the formation of sulfite from adenosine 5'-phosphosulfate (APS) using thioredoxin as an electron donor. This Allochromatium vinosum (strain ATCC 17899 / DSM 180 / NBRC 103801 / NCIMB 10441 / D) (Chromatium vinosum) protein is Adenosine 5'-phosphosulfate reductase.